The chain runs to 287 residues: UBX domain-containing protein 1 (287 aa).

Positions 1-42 (MAECSTLESLIEMGFSPSRAEKALAATGNQGIEPAMDWLVEH) constitute a UBA domain. The disordered stretch occupies residues 44-207 (DDPDIDEPSV…VQEPPTKKEY (164 aa)). 2 stretches are compositionally biased toward basic and acidic residues: residues 72-114 (CEER…EQEK) and 129-169 (KIQE…ERAR). A coiled-coil region spans residues 72–164 (CEERLPLTEE…RVREKIARDK (93 aa)). Residues 176 to 197 (SEPISPPAEASIPATTPSPSSP) show a composition bias toward low complexity. In terms of domain architecture, UBX spans 205 to 284 (KEYDQCRIQV…GLVPSAVLIV (80 aa)).

It is found in the cytoplasm. Its function is as follows. Component of a complex required to couple deglycosylation and proteasome-mediated degradation of misfolded proteins in the endoplasmic reticulum that are retrotranslocated in the cytosol. Involved in ubiquitin-proteasome systems. The sequence is that of UBX domain-containing protein 1 (ubxn1) from Xenopus tropicalis (Western clawed frog).